A 545-amino-acid polypeptide reads, in one-letter code: Metal transporter NRAT1 (545 aa).

The next 12 helical transmembrane spans lie at 51–71 (FLAH…PSNL), 84–104 (ELLW…TLAA), 128–148 (IFLW…EVLG), 155–175 (ILLK…TLLL), 188–208 (FIIA…LSYL), 234–254 (IALF…ALVL), 278–298 (LAFI…GSIC), 333–353 (VVYA…CTFA), 373–395 (LITR…PSGA), 398–418 (LIIL…IPLL), 437–457 (VVIA…FLVW), and 474–494 (GLIS…VVYL). The tract at residues 516-545 (EAGGTPVVDASAADEDQPAPYRKDLADASM) is disordered. Over residues 536–545 (YRKDLADASM) the composition is skewed to basic and acidic residues.

It belongs to the NRAMP (TC 2.A.55) family. Expressed at low levels in roots.

Its subcellular location is the cell membrane. Functionally, metal transporter that transports the trivalent cation aluminum (Al(3+)), but does not seem to transport divalent cations such as iron (Fe(2+)), manganese (Mg(2+)) or Cadmium (Cd(2+)). Involved in Al tolerance by taking up Al in root cells, where it is detoxified by chelation with organic acid anions and sequestration into the vacuoles. The sequence is that of Metal transporter NRAT1 (NRAT1) from Oryza sativa subsp. japonica (Rice).